We begin with the raw amino-acid sequence, 176 residues long: Isopentenyl-diphosphate Delta-isomerase (176 aa).

The Mn(2+) site is built by His24 and His30. In terms of domain architecture, Nudix hydrolase spans 28–160 (LLHRAFSIFV…PSAFTVWFHC (133 aa)). Cys65 is an active-site residue. A Mn(2+)-binding site is contributed by His67. A Mg(2+)-binding site is contributed by Glu85. Mn(2+) contacts are provided by Glu110 and Glu112. The active site involves Glu112.

Belongs to the IPP isomerase type 1 family. It depends on Mg(2+) as a cofactor. The cofactor is Mn(2+).

The protein localises to the cytoplasm. The enzyme catalyses isopentenyl diphosphate = dimethylallyl diphosphate. The protein operates within isoprenoid biosynthesis; dimethylallyl diphosphate biosynthesis; dimethylallyl diphosphate from isopentenyl diphosphate: step 1/1. In terms of biological role, catalyzes the 1,3-allylic rearrangement of the homoallylic substrate isopentenyl (IPP) to its highly electrophilic allylic isomer, dimethylallyl diphosphate (DMAPP). The polypeptide is Isopentenyl-diphosphate Delta-isomerase (Burkholderia multivorans (strain ATCC 17616 / 249)).